Reading from the N-terminus, the 107-residue chain is Iron-binding protein IscA (107 aa).

Residues Cys-35, Cys-99, and Cys-101 each contribute to the Fe cation site.

It belongs to the HesB/IscA family. As to quaternary structure, homodimer; may form tetramers and higher multimers. It depends on Fe cation as a cofactor.

In terms of biological role, is able to transfer iron-sulfur clusters to apo-ferredoxin. Multiple cycles of [2Fe2S] cluster formation and transfer are observed, suggesting that IscA acts catalytically. Recruits intracellular free iron so as to provide iron for the assembly of transient iron-sulfur cluster in IscU in the presence of IscS, L-cysteine and the thioredoxin reductase system TrxA/TrxB. The chain is Iron-binding protein IscA from Xenorhabdus nematophila (strain ATCC 19061 / DSM 3370 / CCUG 14189 / LMG 1036 / NCIMB 9965 / AN6).